The sequence spans 44 residues: Antimicrobial peptide 2 (44 aa).

In terms of processing, disulfide bonds. In terms of tissue distribution, expressed in flowers but not in leaves, seeds or roots (at protein level).

In terms of biological role, antimicrobial peptide. Active against fungal species B.cinerea (IC(50)=5.2 uM), A.niger (IC(50)=2.6 uM) and B.sorokinina (IC(50)=5.2 uM) but not against F.oxysporum, F.graminearum and P.debaryanum at concentrations below 10 uM. Inhibits growth of P.infestans at concentration between 1.3 uM and 5.2 uM. Active against bacterial species P.syringae, B.subtilis, X.campestris and C.michiganense. The protein is Antimicrobial peptide 2 of Taraxacum officinale (Common dandelion).